Reading from the N-terminus, the 384-residue chain is S-adenosylmethionine synthase (384 aa).

ATP is bound at residue His-15. Asp-17 serves as a coordination point for Mg(2+). Position 43 (Glu-43) interacts with K(+). L-methionine-binding residues include Glu-56 and Gln-99. The tract at residues 99-109 (QSPDINQGVDR) is flexible loop. ATP is bound by residues 164 to 166 (DAK), 230 to 231 (RF), Asp-239, 245 to 246 (RK), Ala-262, and Lys-266. Residue Asp-239 participates in L-methionine binding. Lys-270 contacts L-methionine.

It belongs to the AdoMet synthase family. Homotetramer; dimer of dimers. The cofactor is Mg(2+). K(+) is required as a cofactor.

It localises to the cytoplasm. The enzyme catalyses L-methionine + ATP + H2O = S-adenosyl-L-methionine + phosphate + diphosphate. It participates in amino-acid biosynthesis; S-adenosyl-L-methionine biosynthesis; S-adenosyl-L-methionine from L-methionine: step 1/1. Catalyzes the formation of S-adenosylmethionine (AdoMet) from methionine and ATP. The overall synthetic reaction is composed of two sequential steps, AdoMet formation and the subsequent tripolyphosphate hydrolysis which occurs prior to release of AdoMet from the enzyme. The chain is S-adenosylmethionine synthase from Erwinia tasmaniensis (strain DSM 17950 / CFBP 7177 / CIP 109463 / NCPPB 4357 / Et1/99).